The primary structure comprises 340 residues: Uroporphyrinogen decarboxylase (340 aa).

Substrate is bound by residues 21-25 (RQAGR), aspartate 71, tyrosine 148, serine 203, and histidine 316.

The protein belongs to the uroporphyrinogen decarboxylase family. Homodimer.

It is found in the cytoplasm. The enzyme catalyses uroporphyrinogen III + 4 H(+) = coproporphyrinogen III + 4 CO2. The protein operates within porphyrin-containing compound metabolism; protoporphyrin-IX biosynthesis; coproporphyrinogen-III from 5-aminolevulinate: step 4/4. Functionally, catalyzes the decarboxylation of four acetate groups of uroporphyrinogen-III to yield coproporphyrinogen-III. This is Uroporphyrinogen decarboxylase from Campylobacter jejuni subsp. jejuni serotype O:6 (strain 81116 / NCTC 11828).